The sequence spans 406 residues: Type II secretion system protein F (406 aa).

The Cytoplasmic portion of the chain corresponds to methionine 1 to methionine 171. Glutamate 97, glutamate 151, and aspartate 155 together coordinate Ca(2+). Residues isoleucine 172 to valine 192 form a helical membrane-spanning segment. Over valine 193–histidine 223 the chain is Periplasmic. A helical membrane pass occupies residues tryptophan 224–threonine 244. The Cytoplasmic segment spans residues lysine 245–asparagine 368. Residues isoleucine 369 to isoleucine 389 traverse the membrane as a helical segment. Residues valine 390 to arginine 406 lie on the Periplasmic side of the membrane.

It belongs to the GSP F family. As to quaternary structure, type II secretion system is composed of four main components: the outer membrane complex, the inner membrane complex, the cytoplasmic secretion ATPase and the periplasm-spanning pseudopilus. Homodimer. Interacts with EpsE/GspE and EpsL/GspL components.

It is found in the cell inner membrane. In terms of biological role, component of the type II secretion system inner membrane complex required for the energy-dependent secretion of extracellular factors such as proteases and toxins from the periplasm. This Vibrio cholerae serotype O1 (strain ATCC 39315 / El Tor Inaba N16961) protein is Type II secretion system protein F (epsF).